We begin with the raw amino-acid sequence, 201 residues long: 3-isopropylmalate dehydratase small subunit (201 aa).

It belongs to the LeuD family. LeuD type 1 subfamily. Heterodimer of LeuC and LeuD.

The catalysed reaction is (2R,3S)-3-isopropylmalate = (2S)-2-isopropylmalate. The protein operates within amino-acid biosynthesis; L-leucine biosynthesis; L-leucine from 3-methyl-2-oxobutanoate: step 2/4. Its function is as follows. Catalyzes the isomerization between 2-isopropylmalate and 3-isopropylmalate, via the formation of 2-isopropylmaleate. The protein is 3-isopropylmalate dehydratase small subunit of Klebsiella pneumoniae (strain 342).